A 393-amino-acid polypeptide reads, in one-letter code: ATP phosphoribosyltransferase regulatory subunit (393 aa).

It belongs to the class-II aminoacyl-tRNA synthetase family. HisZ subfamily. Heteromultimer composed of HisG and HisZ subunits.

Its subcellular location is the cytoplasm. The protein operates within amino-acid biosynthesis; L-histidine biosynthesis; L-histidine from 5-phospho-alpha-D-ribose 1-diphosphate: step 1/9. Functionally, required for the first step of histidine biosynthesis. May allow the feedback regulation of ATP phosphoribosyltransferase activity by histidine. The chain is ATP phosphoribosyltransferase regulatory subunit from Synechococcus sp. (strain RCC307).